Consider the following 208-residue polypeptide: MKVVEVKHPLVRHKIGLMREGDISTKRFRELAAEVGSLLTYEATADFETETVTIEGWNGPVEVDQIKGKKVTVVPILRAGLGMMDGVLEHIPSARISVVGIYRDEETLEPVPYFEKLASDMNERIALIVDPMLATGGSMIATIDLLKKRGCTSIKALVLVAAPEGIKALEAAHPDVELYTAAIDRCLNEKGYILPGLGDAGDKIFGTK.

5-phospho-alpha-D-ribose 1-diphosphate is bound by residues Arg-78, Arg-103, and 130–138 (DPMLATGGS). Residues Ile-193 and 198–200 (GDA) contribute to the uracil site. A 5-phospho-alpha-D-ribose 1-diphosphate-binding site is contributed by Asp-199.

The protein belongs to the UPRTase family. Requires Mg(2+) as cofactor.

It catalyses the reaction UMP + diphosphate = 5-phospho-alpha-D-ribose 1-diphosphate + uracil. Its pathway is pyrimidine metabolism; UMP biosynthesis via salvage pathway; UMP from uracil: step 1/1. Allosterically activated by GTP. Catalyzes the conversion of uracil and 5-phospho-alpha-D-ribose 1-diphosphate (PRPP) to UMP and diphosphate. This is Uracil phosphoribosyltransferase from Shewanella sp. (strain ANA-3).